The sequence spans 131 residues: NADPH-dependent 7-cyano-7-deazaguanine reductase (131 aa).

The active-site Thioimide intermediate is cysteine 47. The Proton donor role is filled by aspartate 54. Substrate-binding positions include methionine 69 to leucine 71 and histidine 88 to glutamate 89.

It belongs to the GTP cyclohydrolase I family. QueF type 1 subfamily.

Its subcellular location is the cytoplasm. The catalysed reaction is 7-aminomethyl-7-carbaguanine + 2 NADP(+) = 7-cyano-7-deazaguanine + 2 NADPH + 3 H(+). It participates in tRNA modification; tRNA-queuosine biosynthesis. Its function is as follows. Catalyzes the NADPH-dependent reduction of 7-cyano-7-deazaguanine (preQ0) to 7-aminomethyl-7-deazaguanine (preQ1). The polypeptide is NADPH-dependent 7-cyano-7-deazaguanine reductase (Microcystis aeruginosa (strain NIES-843 / IAM M-2473)).